Reading from the N-terminus, the 117-residue chain is Large ribosomal subunit protein bL20 (117 aa).

The protein belongs to the bacterial ribosomal protein bL20 family.

In terms of biological role, binds directly to 23S ribosomal RNA and is necessary for the in vitro assembly process of the 50S ribosomal subunit. It is not involved in the protein synthesizing functions of that subunit. This chain is Large ribosomal subunit protein bL20 (rplT), found in Rickettsia prowazekii (strain Madrid E).